Here is a 122-residue protein sequence, read N- to C-terminus: Small ribosomal subunit protein uS12 (122 aa).

Residues 1 to 24 are disordered; the sequence is MPTINQLIRKKRKSTGKKRTAPAL. Over residues 8 to 20 the composition is skewed to basic residues; it reads IRKKRKSTGKKRT. D89 is subject to 3-methylthioaspartic acid.

The protein belongs to the universal ribosomal protein uS12 family. Part of the 30S ribosomal subunit. Contacts proteins S8 and S17. May interact with IF1 in the 30S initiation complex.

With S4 and S5 plays an important role in translational accuracy. Functionally, interacts with and stabilizes bases of the 16S rRNA that are involved in tRNA selection in the A site and with the mRNA backbone. Located at the interface of the 30S and 50S subunits, it traverses the body of the 30S subunit contacting proteins on the other side and probably holding the rRNA structure together. The combined cluster of proteins S8, S12 and S17 appears to hold together the shoulder and platform of the 30S subunit. This chain is Small ribosomal subunit protein uS12, found in Natranaerobius thermophilus (strain ATCC BAA-1301 / DSM 18059 / JW/NM-WN-LF).